The primary structure comprises 280 residues: Putative sugar uptake protein (280 aa).

10 helical membrane-spanning segments follow: residues 4 to 21 (LIALIPALGWGIFSLIAG), 33 to 52 (MGLGTGALIIGIITAIIHPA), 56 to 78 (ITIFSLSLISGMFCALGQSGQFI), 91 to 113 (LSTGFQLIGNTLIGAIIFGEWTS), 117 to 136 (YLIGTLALILIIVGVSLTAI), 149 to 166 (IILLLFTSIGYWIYSSFP), 176 to 195 (LFLPQMIGIFIGSIIFLLVS), 207 to 229 (WLNIFSGFSYGIAAFSYIFSAQL), 233 to 255 (ITAFIYSQLCVIISTLGGIFFIG), and 262 to 279 (ELIATFVGLILIIIGAAI).

This sequence belongs to the GRP transporter (TC 2.A.7.5) family.

The protein resides in the cell membrane. In Lactobacillus helveticus (Lactobacillus suntoryeus), this protein is Putative sugar uptake protein.